Consider the following 438-residue polypeptide: Cobyrinate a,c-diamide synthase (438 aa).

In terms of domain architecture, GATase cobBQ-type spans 242–426; that stretch reads TIAIARDAAF…FHAYFSSCPA (185 aa). The active-site Nucleophile is the Cys325.

It belongs to the CobB/CbiA family. Mg(2+) is required as a cofactor.

The enzyme catalyses cob(II)yrinate + 2 L-glutamine + 2 ATP + 2 H2O = cob(II)yrinate a,c diamide + 2 L-glutamate + 2 ADP + 2 phosphate + 2 H(+). Its pathway is cofactor biosynthesis; adenosylcobalamin biosynthesis; cob(II)yrinate a,c-diamide from sirohydrochlorin (anaerobic route): step 10/10. In terms of biological role, catalyzes the ATP-dependent amidation of the two carboxylate groups at positions a and c of cobyrinate, using either L-glutamine or ammonia as the nitrogen source. This Herminiimonas arsenicoxydans protein is Cobyrinate a,c-diamide synthase.